Here is a 30-residue protein sequence, read N- to C-terminus: GIPCGESCVFIPCITGIAGCSCKSKVCYRN.

Positions 1 to 30 (GIPCGESCVFIPCITGIAGCSCKSKVCYRN) form a cross-link, cyclopeptide (Gly-Asn). 3 disulfide bridges follow: C4–C20, C8–C22, and C13–C27.

Post-translationally, this is a cyclic peptide.

It is found in the secreted. Probably participates in a plant defense mechanism. The protein is Cyclotide cter-O of Clitoria ternatea (Butterfly pea).